A 556-amino-acid chain; its full sequence is MDIRRIVLYMALALIGLSLWNAWQIDYPAKQPVEEKTASQLTSDGHLLPQIIPSNAEQPVTLKAEEKASSGKQLIQVKTDILDVDIDLKNGDIVKGLLLDYPLSVEDKNKPFPLLQNQASQRYVANSSLFVLDGQTPQSLDFDFTSEKEYYELKPDQNQLIVTLNGKSEDGLDVKKEFVFTKGSYLIEVNYKIANIGNSLWKGYFNTQLLRSSPKEDKSSIFHIGSYTGASFSNPGKNRYQKVSFSDMSKSNLDVDAKGGWIAMQQHYFLSAWVPNADSENKFYTLATDKDYTIGAVSQPITVKPKEDKIVGSKLYIGPEITSVLKGISPSLDLTVDYGILWFLSSLLFSLMKAIYTVVGNWGWSIVLVTVLIKLAFYRLSATSYKSMASMRKLQPKLQALRERYGDDKAKISQATMELYKQEKVNPLGGCLPILIQIPVFIALYWVLLESVELRQAPFIFWINDLASADPYHVLPLIMGATMLIQQKLNPAPADPMQAKVMMFLPILFTGLFWNFPSGLVLYWIVNNTLSILQQWYITRKYSDEKPAKKVVATAK.

A run of 5 helical transmembrane segments spans residues 6-26 (IVLY…WQID), 332-352 (LDLT…FSLM), 358-378 (VVGN…LAFY), 428-448 (LGGC…YWVL), and 501-521 (VMMF…SGLV).

The protein belongs to the OXA1/ALB3/YidC family. Type 1 subfamily. As to quaternary structure, interacts with the Sec translocase complex via SecD. Specifically interacts with transmembrane segments of nascent integral membrane proteins during membrane integration.

Its subcellular location is the cell inner membrane. Its function is as follows. Required for the insertion and/or proper folding and/or complex formation of integral membrane proteins into the membrane. Involved in integration of membrane proteins that insert both dependently and independently of the Sec translocase complex, as well as at least some lipoproteins. Aids folding of multispanning membrane proteins. This Legionella pneumophila (strain Lens) protein is Membrane protein insertase YidC.